Consider the following 561-residue polypeptide: Arginine--tRNA ligase (561 aa).

Residues 119–129 (PNIAKPMSMGH) carry the 'HIGH' region motif.

It belongs to the class-I aminoacyl-tRNA synthetase family. In terms of assembly, monomer.

Its subcellular location is the cytoplasm. It carries out the reaction tRNA(Arg) + L-arginine + ATP = L-arginyl-tRNA(Arg) + AMP + diphosphate. This chain is Arginine--tRNA ligase, found in Lactobacillus acidophilus (strain ATCC 700396 / NCK56 / N2 / NCFM).